A 271-amino-acid chain; its full sequence is Orotidine 5'-phosphate decarboxylase (271 aa).

K95 acts as the Proton donor in catalysis.

Belongs to the OMP decarboxylase family. Type 2 subfamily.

It catalyses the reaction orotidine 5'-phosphate + H(+) = UMP + CO2. It functions in the pathway pyrimidine metabolism; UMP biosynthesis via de novo pathway; UMP from orotate: step 2/2. This is Orotidine 5'-phosphate decarboxylase from Janthinobacterium sp. (strain Marseille) (Minibacterium massiliensis).